A 1446-amino-acid chain; its full sequence is Bud site selection protein 4 (1446 aa).

Disordered stretches follow at residues 69–103 (NQWN…TNLL), 358–385 (VSEE…NPSS), 425–446 (DNNI…SGKE), 495–525 (ASED…QNLE), 823–844 (SSSL…SQAF), and 1025–1044 (KKNT…RVSS). Residues 86–98 (NYDDDEEQGDESD) show a composition bias toward acidic residues. Polar residues-rich tracts occupy residues 425–434 (DNNISKSAND) and 495–524 (ASED…QQNL). A compositionally biased stretch (basic and acidic residues) spans 1028–1044 (TQKDLKDGTTAEKRVSS). A PH domain is found at 1314–1425 (DITKEGYLLQ…WYMKLKEVVE (112 aa)).

It belongs to the BUD4 family.

It is found in the bud neck. In terms of biological role, required for selection of future bud sites. Cooperates with other bud site selection proteins to recognize a spatial landmark during mitosis and they subsequently become a landmark for downstream polarity establishment factors that coordinate budding and cytokinesis. Involved in the septin organization at the bud neck. The sequence is that of Bud site selection protein 4 (BUD4) from Candida glabrata (strain ATCC 2001 / BCRC 20586 / JCM 3761 / NBRC 0622 / NRRL Y-65 / CBS 138) (Yeast).